Here is a 127-residue protein sequence, read N- to C-terminus: Class I hydrophobin 1 (127 aa).

Residues 1-20 form the signal peptide; sequence MLSLLSKAVSLAILVTAVVA. 4 cysteine pairs are disulfide-bonded: C53/C108, C60/C102, C61/C94, and C109/C122. N-linked (GlcNAc...) asparagine glycosylation occurs at N66.

It belongs to the fungal hydrophobin family. As to quaternary structure, self-assembles to form functional amyloid fibrils called rodlets. Self-assembly into fibrillar rodlets occurs spontaneously at hydrophobic:hydrophilic interfaces and the rodlets further associate laterally to form amphipathic monolayers. Expressed everywhere in the mycelial tissues of developing fruiting bodies except for the top parts of the pileus (cap) and for the prehymenophore; but high level of the transcript is detected in the parts surrounding the prehymenophore.

It is found in the secreted. Its subcellular location is the cell wall. In terms of biological role, aerial growth, conidiation, and dispersal of filamentous fungi in the environment rely upon a capability of their secreting small amphipathic proteins called hydrophobins (HPBs) with low sequence identity. Class I can self-assemble into an outermost layer of rodlet bundles on aerial cell surfaces, conferring cellular hydrophobicity that supports fungal growth, development and dispersal; whereas Class II form highly ordered films at water-air interfaces through intermolecular interactions but contribute nothing to the rodlet structure. Hyd1 is a class I hydrophobin that plays a role in fruiting body initiation rather than in mature fruit body maintenance. Seems to be involved in the formation in the extracellular matrix of lined air channels with a hydrophobic membrane. These channels may help to provide gas exchange during respiration in mycelial tissues of developing fruiting bodies and are formed all over the mycelial tissues of these developing fruiting bodies except for the top parts of the pileus (cap) and for the prehymenophore. The chain is Class I hydrophobin 1 from Lentinula edodes (Shiitake mushroom).